The sequence spans 151 residues: Transcriptional repressor NrdR (151 aa).

A zinc finger spans residues 3-34 (CPFCNAQDTKVIDSRLVSEGSQVRRRRSCNEC). The region spanning 49–139 (PRLIKSDGRR…VYRSFKDVKE (91 aa)) is the ATP-cone domain.

The protein belongs to the NrdR family. Zn(2+) serves as cofactor.

In terms of biological role, negatively regulates transcription of bacterial ribonucleotide reductase nrd genes and operons by binding to NrdR-boxes. The polypeptide is Transcriptional repressor NrdR (Psychromonas ingrahamii (strain DSM 17664 / CCUG 51855 / 37)).